Reading from the N-terminus, the 375-residue chain is Succinyl-diaminopimelate desuccinylase (375 aa).

Histidine 66 contacts Zn(2+). The active site involves aspartate 68. Residue aspartate 99 participates in Zn(2+) binding. Glutamate 133 functions as the Proton acceptor in the catalytic mechanism. Zn(2+)-binding residues include glutamate 134, glutamate 162, and histidine 348.

This sequence belongs to the peptidase M20A family. DapE subfamily. In terms of assembly, homodimer. Requires Zn(2+) as cofactor. Co(2+) is required as a cofactor.

The enzyme catalyses N-succinyl-(2S,6S)-2,6-diaminopimelate + H2O = (2S,6S)-2,6-diaminopimelate + succinate. The protein operates within amino-acid biosynthesis; L-lysine biosynthesis via DAP pathway; LL-2,6-diaminopimelate from (S)-tetrahydrodipicolinate (succinylase route): step 3/3. Its function is as follows. Catalyzes the hydrolysis of N-succinyl-L,L-diaminopimelic acid (SDAP), forming succinate and LL-2,6-diaminopimelate (DAP), an intermediate involved in the bacterial biosynthesis of lysine and meso-diaminopimelic acid, an essential component of bacterial cell walls. This Yersinia pseudotuberculosis serotype O:1b (strain IP 31758) protein is Succinyl-diaminopimelate desuccinylase.